The chain runs to 422 residues: CinA-like protein (422 aa).

This sequence belongs to the CinA family.

The sequence is that of CinA-like protein from Mycolicibacterium vanbaalenii (strain DSM 7251 / JCM 13017 / BCRC 16820 / KCTC 9966 / NRRL B-24157 / PYR-1) (Mycobacterium vanbaalenii).